We begin with the raw amino-acid sequence, 91 residues long: UPF0298 protein spyM18_0447 (91 aa).

It belongs to the UPF0298 family.

Its subcellular location is the cytoplasm. This is UPF0298 protein spyM18_0447 from Streptococcus pyogenes serotype M18 (strain MGAS8232).